We begin with the raw amino-acid sequence, 563 residues long: ATP-dependent RNA helicase DeaD (563 aa).

The Q motif signature appears at 13–41 (ATFADLQIHPRVLRAIGDVGYESPTAIQA). A Helicase ATP-binding domain is found at 44–215 (IPALMAGSDV…AKYLHDPFEV (172 aa)). 57-64 (AQTGTGKT) is an ATP binding site. The short motif at 163–166 (DEAD) is the DEAD box element. The region spanning 226 to 385 (NISQSYIQVA…AQLPTVEDVN (160 aa)) is the Helicase C-terminal domain. 2 disordered regions span residues 441 to 470 (LMAP…PDLT) and 543 to 563 (YRPP…KHVG). Residues 451 to 461 (RNRDQRRDRPQ) show a composition bias toward basic and acidic residues. A compositionally biased stretch (basic residues) spans 551 to 563 (RHNGGKPRRKHVG).

The protein belongs to the DEAD box helicase family. DeaD/CsdA subfamily.

The protein localises to the cytoplasm. It carries out the reaction ATP + H2O = ADP + phosphate + H(+). Its function is as follows. DEAD-box RNA helicase involved in various cellular processes at low temperature, including ribosome biogenesis, mRNA degradation and translation initiation. This Mycobacterium tuberculosis (strain CDC 1551 / Oshkosh) protein is ATP-dependent RNA helicase DeaD.